Reading from the N-terminus, the 1745-residue chain is ADAMTS-like protein 1 (1745 aa).

The signal sequence occupies residues 1 to 28; it reads MECCRRAAPGTPLLVLAFLLLSSRTARS. The 50-residue stretch at 33–82 folds into the TSP type-1 1 domain; that stretch reads EGLWDAWGPWSECSRTCGGGASYSLRRCLSSKSCEGRNIRYRTCSNVDCP. Intrachain disulfides connect Cys45–Cys76, Cys49–Cys81, and Cys60–Cys66. Asn251 is a glycosylation site (N-linked (GlcNAc...) asparagine). Residues Ser310 and Ser391 are each glycosylated (O-linked (Fuc...) serine). 6 TSP type-1 domains span residues 376–424, 436–493, 522–584, 607–667, 703–762, and 763–825; these read PLPR…MYTP, DCPK…TPCY, EEPS…GPCN, ELYD…DPCP, CPPA…KKDD, and CPSE…ATCA. A glycan (O-linked (Fuc...) threonine) is linked at Thr451. Intrachain disulfides connect Cys534–Cys578, Cys538–Cys583, and Cys549–Cys567. Cystine bridges form between Cys775-Cys819, Cys779-Cys824, Cys790-Cys807, and Cys874-Cys922. The region spanning 836–938 is the Ig-like C2-type 1 domain; sequence PHIAAARNIY…EQFVIKLIGG (103 aa). 2 disordered regions span residues 966–991 and 1114–1137; these read EALQ…GLTA and VSGF…RPHR. Positions 1115–1126 are enriched in low complexity; the sequence is SGFSSSLRSSSG. Ig-like C2-type domains lie at 1139–1241, 1261–1352, and 1378–1468; these read PAIL…IAVT, PTVT…TQLL, and PSVL…ASLV. 3 cysteine pairs are disulfide-bonded: Cys1177/Cys1225, Cys1283/Cys1336, and Cys1401/Cys1452. TSP type-1 domains lie at 1528–1591 and 1649–1709; these read CPSR…QLCV and CSVH…TPCE. Residues 1709-1745 form the PLAC domain; sequence ENTECRDTTRYCEKVRQLKLCQLGQFRSRCCGTCGKA.

Monomer. Post-translationally, glycosylated. O-fucosylated by POFUT2 on a serine or a threonine residue found within the consensus sequence C1-X(2)-(S/T)-C2-G of the TSP type-1 repeat domains where C1 and C2 are the first and second cysteine residue of the repeat, respectively. Fucosylated repeats can then be further glycosylated by the addition of a beta-1,3-glucose residue by the glucosyltransferase, B3GALTL. Fucosylation mediates the efficient secretion of ADAMTS family members. Can also be C-glycosylated with one or two mannose molecules on tryptophan residues within the consensus sequence W-X-X-W of the TPRs, and N-glycosylated. These other glycosylations can also facilitate secretion. Disulfide bonds are present.

The protein localises to the secreted. The protein resides in the extracellular space. Its subcellular location is the extracellular matrix. In Mus musculus (Mouse), this protein is ADAMTS-like protein 1 (Adamtsl1).